A 319-amino-acid polypeptide reads, in one-letter code: Putative protein phosphatase 2C 23 (319 aa).

Residues 73-314 (AVRMESASCY…DDITVVVACI (242 aa)) form the PPM-type phosphatase domain. Mn(2+) is bound by residues Gly-102, Asp-235, and Asp-305.

Belongs to the PP2C family. Mg(2+) serves as cofactor.

It carries out the reaction O-phospho-L-seryl-[protein] + H2O = L-seryl-[protein] + phosphate. It catalyses the reaction O-phospho-L-threonyl-[protein] + H2O = L-threonyl-[protein] + phosphate. The sequence is that of Putative protein phosphatase 2C 23 from Oryza sativa subsp. japonica (Rice).